We begin with the raw amino-acid sequence, 147 residues long: Testis-expressed protein 29 (147 aa).

The Extracellular segment spans residues 1-57 (MRYAPEFKKSPSHLLKKFAVCDIPLYDICDYNVSRDRCKELGCCFYKGICYEKAVPS). Residues 58–78 (YVQVFSALIVIIAGAFVITII) traverse the membrane as a helical segment. Residues 79-147 (YRVIQESRRE…IVTEEEETED (69 aa)) are Cytoplasmic-facing. The segment at 86–147 (RREKEVPTEA…IVTEEEETED (62 aa)) is disordered. The span at 99–108 (AKSSVQVETQ) shows a compositional bias: polar residues. Over residues 109-120 (PPSSAGAGSKAP) the composition is skewed to low complexity. Basic and acidic residues predominate over residues 125-135 (PQSKESGREDA).

It is found in the membrane. In Bos taurus (Bovine), this protein is Testis-expressed protein 29 (TEX29).